We begin with the raw amino-acid sequence, 119 residues long: Aspartate 1-decarboxylase (119 aa).

The Schiff-base intermediate with substrate; via pyruvic acid role is filled by serine 25. Residue serine 25 is modified to Pyruvic acid (Ser). Residue threonine 57 participates in substrate binding. The Proton donor role is filled by tyrosine 58. Residue glycine 73–alanine 75 participates in substrate binding.

The protein belongs to the PanD family. In terms of assembly, heterooctamer of four alpha and four beta subunits. Pyruvate is required as a cofactor. In terms of processing, is synthesized initially as an inactive proenzyme, which is activated by self-cleavage at a specific serine bond to produce a beta-subunit with a hydroxyl group at its C-terminus and an alpha-subunit with a pyruvoyl group at its N-terminus.

The protein localises to the cytoplasm. It carries out the reaction L-aspartate + H(+) = beta-alanine + CO2. It participates in cofactor biosynthesis; (R)-pantothenate biosynthesis; beta-alanine from L-aspartate: step 1/1. In terms of biological role, catalyzes the pyruvoyl-dependent decarboxylation of aspartate to produce beta-alanine. The chain is Aspartate 1-decarboxylase from Desulfotalea psychrophila (strain LSv54 / DSM 12343).